A 377-amino-acid chain; its full sequence is 3-dehydroquinate synthase (377 aa).

NAD(+)-binding positions include 115 to 119 (GVIGD), 139 to 140 (TS), Lys152, and Lys162. Zn(2+) is bound by residues Glu195, His257, and His276.

Belongs to the sugar phosphate cyclases superfamily. Dehydroquinate synthase family. It depends on Co(2+) as a cofactor. Zn(2+) is required as a cofactor. The cofactor is NAD(+).

It is found in the cytoplasm. The catalysed reaction is 7-phospho-2-dehydro-3-deoxy-D-arabino-heptonate = 3-dehydroquinate + phosphate. Its pathway is metabolic intermediate biosynthesis; chorismate biosynthesis; chorismate from D-erythrose 4-phosphate and phosphoenolpyruvate: step 2/7. Its function is as follows. Catalyzes the conversion of 3-deoxy-D-arabino-heptulosonate 7-phosphate (DAHP) to dehydroquinate (DHQ). This chain is 3-dehydroquinate synthase, found in Rhizobium etli (strain ATCC 51251 / DSM 11541 / JCM 21823 / NBRC 15573 / CFN 42).